We begin with the raw amino-acid sequence, 341 residues long: Elongation factor Ts (341 aa).

The tract at residues 80-83 (TDFV) is involved in Mg(2+) ion dislocation from EF-Tu.

It belongs to the EF-Ts family.

The protein resides in the cytoplasm. Its function is as follows. Associates with the EF-Tu.GDP complex and induces the exchange of GDP to GTP. It remains bound to the aminoacyl-tRNA.EF-Tu.GTP complex up to the GTP hydrolysis stage on the ribosome. This is Elongation factor Ts from Lactobacillus gasseri (strain ATCC 33323 / DSM 20243 / BCRC 14619 / CIP 102991 / JCM 1131 / KCTC 3163 / NCIMB 11718 / NCTC 13722 / AM63).